We begin with the raw amino-acid sequence, 504 residues long: Maturase K (504 aa).

Belongs to the intron maturase 2 family. MatK subfamily.

The protein resides in the plastid. The protein localises to the chloroplast. Its function is as follows. Usually encoded in the trnK tRNA gene intron. Probably assists in splicing its own and other chloroplast group II introns. In Simmondsia chinensis (Jojoba), this protein is Maturase K.